Consider the following 363-residue polypeptide: Putative agmatine deiminase (363 aa).

The span at 1 to 10 shows a compositional bias: polar residues; the sequence is MTKQLSTSPK. The tract at residues 1 to 20 is disordered; it reads MTKQLSTSPKQDGFRMPAEH. C355 functions as the Amidino-cysteine intermediate in the catalytic mechanism.

Belongs to the agmatine deiminase family.

It carries out the reaction agmatine + H2O = N-carbamoylputrescine + NH4(+). In Photobacterium profundum (strain SS9), this protein is Putative agmatine deiminase.